The following is a 177-amino-acid chain: MSRIAKYPVELPKGVEANIQQDQITVKGPLGTLSQALTGDVTVALDNGKLTFVAANESRHAGAMSGTVRALVANMVTGVSKGFERKLTLVGVGYRAQVQGDAVKLQLGFSHDIVHKLPAGVKAECPTQTEIVIKGSNKQVVGQVAAELRAYREPEPYKGKGVRYADERVVIKETKKK.

This sequence belongs to the universal ribosomal protein uL6 family. In terms of assembly, part of the 50S ribosomal subunit.

In terms of biological role, this protein binds to the 23S rRNA, and is important in its secondary structure. It is located near the subunit interface in the base of the L7/L12 stalk, and near the tRNA binding site of the peptidyltransferase center. The chain is Large ribosomal subunit protein uL6 from Bordetella petrii (strain ATCC BAA-461 / DSM 12804 / CCUG 43448).